A 120-amino-acid polypeptide reads, in one-letter code: Large ribosomal subunit protein uL18 (120 aa).

This sequence belongs to the universal ribosomal protein uL18 family. Part of the 50S ribosomal subunit; part of the 5S rRNA/L5/L18/L25 subcomplex. Contacts the 5S and 23S rRNAs.

Its function is as follows. This is one of the proteins that bind and probably mediate the attachment of the 5S RNA into the large ribosomal subunit, where it forms part of the central protuberance. This chain is Large ribosomal subunit protein uL18, found in Bacillus licheniformis (strain ATCC 14580 / DSM 13 / JCM 2505 / CCUG 7422 / NBRC 12200 / NCIMB 9375 / NCTC 10341 / NRRL NRS-1264 / Gibson 46).